Consider the following 237-residue polypeptide: Ras modification protein ERF4 (237 aa).

The protein belongs to the ERF4 family. Interacts with ERF2.

It localises to the endoplasmic reticulum membrane. Functionally, the ERF2-SHR5 complex is a palmitoyltransferase specific for Ras proteins. Palmitoylates RAS2, which is required for its proper plasma membrane localization. The chain is Ras modification protein ERF4 (SHR5) from Saccharomyces cerevisiae (strain ATCC 204508 / S288c) (Baker's yeast).